Consider the following 488-residue polypeptide: Glutamyl-tRNA(Gln) amidotransferase subunit B, mitochondrial (488 aa).

The protein belongs to the GatB/GatE family. GatB subfamily. As to quaternary structure, subunit of the heterotrimeric GatFAB amidotransferase (AdT) complex, composed of A, B and F subunits.

The protein resides in the mitochondrion. It carries out the reaction L-glutamyl-tRNA(Gln) + L-glutamine + ATP + H2O = L-glutaminyl-tRNA(Gln) + L-glutamate + ADP + phosphate + H(+). Allows the formation of correctly charged Gln-tRNA(Gln) through the transamidation of misacylated Glu-tRNA(Gln) in the mitochondria. The reaction takes place in the presence of glutamine and ATP through an activated gamma-phospho-Glu-tRNA(Gln). The protein is Glutamyl-tRNA(Gln) amidotransferase subunit B, mitochondrial of Candida albicans (strain WO-1) (Yeast).